Here is a 113-residue protein sequence, read N- to C-terminus: Urocortin-2 (113 aa).

The N-terminal stretch at 1 to 23 is a signal peptide; sequence MMTRWALVVFVVLMLDRILFVPG. Residues 24 to 71 constitute a propeptide that is removed on maturation; the sequence is TPIPTFQLLPQNSLETTPSSVTSESSSGTTTGPSASWSNSKASPYLDT. Low complexity predominate over residues 37-61; it reads LETTPSSVTSESSSGTTTGPSASWS. A disordered region spans residues 37–64; the sequence is LETTPSSVTSESSSGTTTGPSASWSNSK. A Valine amide; partial modification is found at valine 110.

It belongs to the sauvagine/corticotropin-releasing factor/urotensin I family. In terms of assembly, binds with high affinity to CRF receptors 2-alpha and 2-beta. In terms of processing, glycosylated.

It is found in the secreted. Its function is as follows. Suppresses food intake, delays gastric emptying and decreases heat-induced edema. Might represent an endogenous ligand for maintaining homeostasis after stress. The chain is Urocortin-2 (Ucn2) from Mus musculus (Mouse).